A 527-amino-acid chain; its full sequence is Succinate-semialdehyde dehydrogenase, mitochondrial (527 aa).

The N-terminal 35 residues, 1-35 (MAMAMAMRRAAALGARHILAASSTSSSGVLLRRHM), are a transit peptide targeting the mitochondrion. NAD(+)-binding positions include Arg208, 223–226 (KPSE), and 276–281 (GSTAVG). Arg208 serves as a coordination point for substrate. Glu298 acts as the Proton acceptor in catalysis. 3 residues coordinate substrate: Arg326, Cys332, and Ser489. Cys332 functions as the Nucleophile in the catalytic mechanism. Residues Cys332 and Cys334 are joined by a disulfide bond.

Belongs to the aldehyde dehydrogenase family. In terms of assembly, homotetramer.

It is found in the mitochondrion matrix. The enzyme catalyses succinate semialdehyde + NAD(+) + H2O = succinate + NADH + 2 H(+). It functions in the pathway amino-acid degradation; 4-aminobutanoate degradation. Redox-regulated. Inhibited under oxydizing conditions. Oxidizes specifically succinate semialdehyde. Involved in plant response to environmental stress by preventing the accumulation of reactive oxygen species. The polypeptide is Succinate-semialdehyde dehydrogenase, mitochondrial (ALDH5F1) (Oryza sativa subsp. japonica (Rice)).